Consider the following 342-residue polypeptide: Ornithine carbamoyltransferase, catabolic (342 aa).

Carbamoyl phosphate-binding positions include 59 to 62 (STRT), serine 83, arginine 110, and 137 to 140 (HPTQ). Residues asparagine 169, aspartate 235, and 239–240 (SL) each bind L-ornithine. Carbamoyl phosphate is bound by residues 276–277 (CL) and arginine 328.

This sequence belongs to the aspartate/ornithine carbamoyltransferase superfamily. OTCase family. In terms of assembly, dodecamer (tetramer of trimers).

It localises to the cytoplasm. The catalysed reaction is carbamoyl phosphate + L-ornithine = L-citrulline + phosphate + H(+). It functions in the pathway amino-acid degradation; L-arginine degradation via ADI pathway; carbamoyl phosphate from L-arginine: step 2/2. Nvolved in the catabolism of arginine. Catalyzes the phosphorolysis of citrulline, the reverse reaction of the biosynthetic one, yielding ornithine and carbamoyl phosphate which serve to generate ATP from ADP. This is Ornithine carbamoyltransferase, catabolic (arcB) from Malacoplasma penetrans (strain HF-2) (Mycoplasma penetrans).